A 399-amino-acid chain; its full sequence is Carbamoyl phosphate synthase arginine-specific small chain (399 aa).

The region spanning 187 to 379 (DVALVDCGVK…VERMRCYRKL (193 aa)) is the Glutamine amidotransferase type-1 domain. Cysteine 267 serves as the catalytic Nucleophile. Catalysis depends on residues histidine 352 and glutamate 354.

Belongs to the CarA family. Heterodimer composed of 2 chains; the small (or glutamine) chain promotes the hydrolysis of glutamine to ammonia, which is used by the large (or ammonia) chain to synthesize carbamoyl phosphate.

It is found in the cytoplasm. It carries out the reaction hydrogencarbonate + L-glutamine + 2 ATP + H2O = carbamoyl phosphate + L-glutamate + 2 ADP + phosphate + 2 H(+). The enzyme catalyses L-glutamine + H2O = L-glutamate + NH4(+). It functions in the pathway amino-acid biosynthesis; L-arginine biosynthesis; carbamoyl phosphate from bicarbonate: step 1/1. In terms of biological role, small subunit of the arginine-specific carbamoyl phosphate synthase (CPSase). CPSase catalyzes the formation of carbamoyl phosphate from the ammonia moiety of glutamine, carbonate, and phosphate donated by ATP, constituting the first step of 2 biosynthetic pathways, one leading to arginine and/or urea and the other to pyrimidine nucleotides. The small subunit (glutamine amidotransferase) binds and cleaves glutamine to supply the large subunit with the substrate ammonia. The chain is Carbamoyl phosphate synthase arginine-specific small chain (CPA1) from Eremothecium gossypii (strain ATCC 10895 / CBS 109.51 / FGSC 9923 / NRRL Y-1056) (Yeast).